The chain runs to 1374 residues: DNA-directed RNA polymerase subunit beta (1374 aa).

This sequence belongs to the RNA polymerase beta chain family. The RNAP catalytic core consists of 2 alpha, 1 beta, 1 beta' and 1 omega subunit. When a sigma factor is associated with the core the holoenzyme is formed, which can initiate transcription.

It catalyses the reaction RNA(n) + a ribonucleoside 5'-triphosphate = RNA(n+1) + diphosphate. DNA-dependent RNA polymerase catalyzes the transcription of DNA into RNA using the four ribonucleoside triphosphates as substrates. The protein is DNA-directed RNA polymerase subunit beta of Acidovorax ebreus (strain TPSY) (Diaphorobacter sp. (strain TPSY)).